The primary structure comprises 299 residues: Class II hydrophobin C (299 aa).

Positions Met-1–Ala-17 are cleaved as a signal peptide. N-linked (GlcNAc...) asparagine glycosylation is found at Asn-39, Asn-78, and Asn-91. Intrachain disulfides connect Cys-232/Cys-281, Cys-242/Cys-272, Cys-243/Cys-255, and Cys-282/Cys-293.

The protein belongs to the cerato-ulmin hydrophobin family.

The protein localises to the secreted. It localises to the cell wall. Its subcellular location is the vacuole. It is found in the cytoplasmic vesicle. Its function is as follows. Aerial growth, conidiation, and dispersal of filamentous fungi in the environment rely upon a capability of their secreting small amphipathic proteins called hydrophobins (HPBs) with low sequence identity. Class I can self-assemble into an outermost layer of rodlet bundles on aerial cell surfaces, conferring cellular hydrophobicity that supports fungal growth, development and dispersal; whereas Class II form highly ordered films at water-air interfaces through intermolecular interactions but contribute nothing to the rodlet structure. Hyd2C contributes to certain cell wall-related features, such as hydrophobicity but is not involved in cell wall-related events during fungal proliferation in host hemocoel. Does not contribute to conidial hydrophobicity. Involved actively in the asexual development. The protein is Class II hydrophobin C of Beauveria bassiana (strain ARSEF 2860) (White muscardine disease fungus).